A 412-amino-acid chain; its full sequence is Multifunctional CCA protein (412 aa).

G8 and R11 together coordinate ATP. Residues G8 and R11 each contribute to the CTP site. Residues D21 and D23 each contribute to the Mg(2+) site. R91, R137, and R140 together coordinate ATP. Positions 91, 137, and 140 each coordinate CTP. In terms of domain architecture, HD spans 228-329; it reads TGIHTLMTLS…VKLFDSIDAW (102 aa).

The protein belongs to the tRNA nucleotidyltransferase/poly(A) polymerase family. Bacterial CCA-adding enzyme type 1 subfamily. Monomer. Can also form homodimers and oligomers. Mg(2+) serves as cofactor. Requires Ni(2+) as cofactor.

It catalyses the reaction a tRNA precursor + 2 CTP + ATP = a tRNA with a 3' CCA end + 3 diphosphate. The enzyme catalyses a tRNA with a 3' CCA end + 2 CTP + ATP = a tRNA with a 3' CCACCA end + 3 diphosphate. Functionally, catalyzes the addition and repair of the essential 3'-terminal CCA sequence in tRNAs without using a nucleic acid template. Adds these three nucleotides in the order of C, C, and A to the tRNA nucleotide-73, using CTP and ATP as substrates and producing inorganic pyrophosphate. tRNA 3'-terminal CCA addition is required both for tRNA processing and repair. Also involved in tRNA surveillance by mediating tandem CCA addition to generate a CCACCA at the 3' terminus of unstable tRNAs. While stable tRNAs receive only 3'-terminal CCA, unstable tRNAs are marked with CCACCA and rapidly degraded. The protein is Multifunctional CCA protein of Escherichia coli O8 (strain IAI1).